The primary structure comprises 221 residues: 3-isopropylmalate dehydratase small subunit (221 aa).

The protein belongs to the LeuD family. LeuD type 1 subfamily. As to quaternary structure, heterodimer of LeuC and LeuD.

The enzyme catalyses (2R,3S)-3-isopropylmalate = (2S)-2-isopropylmalate. It participates in amino-acid biosynthesis; L-leucine biosynthesis; L-leucine from 3-methyl-2-oxobutanoate: step 2/4. In terms of biological role, catalyzes the isomerization between 2-isopropylmalate and 3-isopropylmalate, via the formation of 2-isopropylmaleate. This is 3-isopropylmalate dehydratase small subunit from Nitrosomonas europaea (strain ATCC 19718 / CIP 103999 / KCTC 2705 / NBRC 14298).